Consider the following 354-residue polypeptide: uncharacterized protein (354 aa).

A signal peptide spans 1–21; that stretch reads MRYLLIVITFFMGFSSLPAWA.

To E.coli YbgO.

In terms of biological role, may be involved in a fimbrial system chaperoned by YqiH and exported by YqiG. This is an uncharacterized protein from Escherichia coli (strain K12).